A 289-amino-acid polypeptide reads, in one-letter code: Diaminopimelate epimerase (289 aa).

Residues Asn-11 and Asn-78 each coordinate substrate. Residue Cys-87 is the Proton donor of the active site. Substrate-binding positions include 88–89, Asn-163, Asn-199, and 217–218; these read GN and ER. Cys-226 acts as the Proton acceptor in catalysis. 227 to 228 is a binding site for substrate; it reads GT.

This sequence belongs to the diaminopimelate epimerase family. As to quaternary structure, homodimer.

The protein localises to the cytoplasm. The enzyme catalyses (2S,6S)-2,6-diaminopimelate = meso-2,6-diaminopimelate. Its pathway is amino-acid biosynthesis; L-lysine biosynthesis via DAP pathway; DL-2,6-diaminopimelate from LL-2,6-diaminopimelate: step 1/1. In terms of biological role, catalyzes the stereoinversion of LL-2,6-diaminopimelate (L,L-DAP) to meso-diaminopimelate (meso-DAP), a precursor of L-lysine and an essential component of the bacterial peptidoglycan. The chain is Diaminopimelate epimerase from Rhodococcus jostii (strain RHA1).